The primary structure comprises 49 residues: Small, acid-soluble spore protein O (49 aa).

The segment at 1–49 is disordered; it reads MVKRKANHVIPGMNDASAQGKGAGYNEELSNEPLTEAQKQNNKKRKKNQ.

The protein belongs to the SspO family.

It is found in the spore core. The sequence is that of Small, acid-soluble spore protein O from Anoxybacillus flavithermus (strain DSM 21510 / WK1).